We begin with the raw amino-acid sequence, 294 residues long: Acetylglutamate kinase (294 aa).

Residues 69–70, R91, and N190 contribute to the substrate site; that span reads GG.

The protein belongs to the acetylglutamate kinase family. ArgB subfamily.

The protein resides in the cytoplasm. The enzyme catalyses N-acetyl-L-glutamate + ATP = N-acetyl-L-glutamyl 5-phosphate + ADP. Its pathway is amino-acid biosynthesis; L-arginine biosynthesis; N(2)-acetyl-L-ornithine from L-glutamate: step 2/4. Its function is as follows. Catalyzes the ATP-dependent phosphorylation of N-acetyl-L-glutamate. The sequence is that of Acetylglutamate kinase from Mycobacterium tuberculosis (strain CDC 1551 / Oshkosh).